Consider the following 500-residue polypeptide: Lysine--tRNA ligase (500 aa).

Positions 402 and 409 each coordinate Mg(2+).

It belongs to the class-II aminoacyl-tRNA synthetase family. In terms of assembly, homodimer. Mg(2+) is required as a cofactor.

Its subcellular location is the cytoplasm. It catalyses the reaction tRNA(Lys) + L-lysine + ATP = L-lysyl-tRNA(Lys) + AMP + diphosphate. The polypeptide is Lysine--tRNA ligase (Buchnera aphidicola subsp. Baizongia pistaciae (strain Bp)).